Here is a 355-residue protein sequence, read N- to C-terminus: Ataxin-3 (355 aa).

Residue methionine 1 forms a Peptide (Met-Gly) (interchain with G-Cter in ubiquitin) linkage. One can recognise a Josephin domain in the interval 1-180 (MESIFHEKQE…DCEADQLLQM (180 aa)). Cysteine 14 serves as the catalytic Nucleophile. Histidine 119 serves as the catalytic Proton acceptor. The active site involves asparagine 134. A Glycyl lysine isopeptide (Lys-Gly) (interchain with G-Cter in ubiquitin) cross-link involves residue lysine 200. A Phosphoserine modification is found at serine 219. 2 UIM domains span residues 224 to 243 (EDED…IDME) and 244 to 263 (DEEA…SSRS). Polar residues predominate over residues 257-275 (MQGSSRSMCENSPQTSSPD). Residues 257–355 (MQGSSRSMCE…KDNLKAERKK (99 aa)) are disordered. 3 positions are modified to phosphoserine: serine 268, serine 272, and serine 273. Residues 279 to 289 (EELRRRREAYF) are compositionally biased toward basic and acidic residues. Serine 321 is modified (phosphoserine). The 20-residue stretch at 329 to 348 (SEEDMLRAAVTMSLETAKDN) folds into the UIM 3 domain. A compositionally biased stretch (basic and acidic residues) spans 344 to 355 (TAKDNLKAERKK).

Interacts with STUB1/CHIP (when monoubiquitinated). Interacts with DNA repair proteins RAD23A and RAD23B. Interacts with BECN1 (via its poly-Gln domain). Interacts with PRKN, UBR2, VCP and tubulin. In terms of processing, monoubiquitinated by UBE2W, possibly leading to activate the deubiquitinating enzyme activity.

The protein resides in the nucleus matrix. It is found in the nucleus. Its subcellular location is the lysosome membrane. The catalysed reaction is Thiol-dependent hydrolysis of ester, thioester, amide, peptide and isopeptide bonds formed by the C-terminal Gly of ubiquitin (a 76-residue protein attached to proteins as an intracellular targeting signal).. In terms of biological role, deubiquitinating enzyme involved in protein homeostasis maintenance, transcription, cytoskeleton regulation, myogenesis and degradation of misfolded chaperone substrates. Binds long polyubiquitin chains and trims them, while it has weak or no activity against chains of 4 or less ubiquitins. Involved in degradation of misfolded chaperone substrates via its interaction with STUB1/CHIP: recruited to monoubiquitinated STUB1/CHIP, and restricts the length of ubiquitin chain attached to STUB1/CHIP substrates and preventing further chain extension. Interacts with key regulators of transcription and represses transcription: acts as a histone-binding protein that regulates transcription. Acts as a negative regulator of mTORC1 signaling in response to amino acid deprivation by mediating deubiquitination of RHEB, thereby promoting RHEB inactivation by the TSC-TBC complex. Regulates autophagy via the deubiquitination of 'Lys-402' of BECN1 leading to the stabilization of BECN1. This Mus musculus (Mouse) protein is Ataxin-3 (Atxn3).